A 138-amino-acid chain; its full sequence is ATP synthase epsilon chain (138 aa).

The protein belongs to the ATPase epsilon chain family. As to quaternary structure, F-type ATPases have 2 components, CF(1) - the catalytic core - and CF(0) - the membrane proton channel. CF(1) has five subunits: alpha(3), beta(3), gamma(1), delta(1), epsilon(1). CF(0) has three main subunits: a, b and c.

The protein localises to the cell inner membrane. In terms of biological role, produces ATP from ADP in the presence of a proton gradient across the membrane. This chain is ATP synthase epsilon chain, found in Psychrobacter arcticus (strain DSM 17307 / VKM B-2377 / 273-4).